Consider the following 783-residue polypeptide: B-cell scaffold protein with ankyrin repeats (783 aa).

Positions 1-154 are interaction with ITPR2; that stretch reads MLPVASGTRG…GYISVIRQIL (154 aa). Residues 25-153 form the TIR domain; that stretch reads NAKDILLLYE…DGYISVIRQI (129 aa). The 128-residue stretch at 199 to 326 folds into the DBB domain; the sequence is VLPGEIPCEK…EIPYYEFKHL (128 aa). ANK repeat units lie at residues 341–370 and 377–407; these read ELPTLLHCAAKFGLKNLALHLLQCSGATRA and DGSDLLHIAERHGHEELKEVFEDFLSQNTGR. Disordered stretches follow at residues 422-521, 538-586, 604-624, and 641-670; these read FSTY…AASQ, MERS…EDNE, SFIINRPPAPTPRPTHIPPKE, and RQSDGDKFYSLPKKPDKTRMEGPTFPSTRD. The span at 444-479 shows a compositional bias: basic and acidic residues; that stretch reads RNTDRSEEPERSVEMKEEEAGAEARRSLSEGERESS. Residues 505 to 515 show a composition bias toward pro residues; sequence HCRPPLLPPRP. The segment covering 549 to 565 has biased composition (basic and acidic residues); sequence ARPETREESSREEKKEE. A compositionally biased stretch (acidic residues) spans 566–586; sequence AQEEEEEEENPYAFAETEDNE. Positions 610 to 620 are enriched in pro residues; the sequence is PPAPTPRPTHI. Residues 641–660 are compositionally biased toward basic and acidic residues; it reads RQSDGDKFYSLPKKPDKTRM. Residue Tyr-649 is modified to Phosphotyrosine.

In terms of assembly, interacts with LYN, ITPR1 and ITPR2. Post-translationally, phosphorylated on tyrosines upon BCR activation. As to expression, specifically expressed in spleen. Highly expressed in immature B-cells and recirculating B-cells, and at low levels in pro-B and pre-B cells.

Functionally, involved in B-cell receptor (BCR)-induced Ca(2+) mobilization from intracellular stores. Promotes Lyn-mediated phosphorylation of IP3 receptors 1 and 2. The protein is B-cell scaffold protein with ankyrin repeats (Bank1) of Mus musculus (Mouse).